An 82-amino-acid polypeptide reads, in one-letter code: ATP synthase subunit c, chloroplastic (82 aa).

A run of 2 helical transmembrane segments spans residues 3 to 23 (PIVA…AAIG) and 57 to 77 (FAFM…LLFA).

It belongs to the ATPase C chain family. In terms of assembly, F-type ATPases have 2 components, F(1) - the catalytic core - and F(0) - the membrane proton channel. F(1) has five subunits: alpha(3), beta(3), gamma(1), delta(1), epsilon(1). F(0) has four main subunits: a(1), b(1), b'(1) and c(10-14). The alpha and beta chains form an alternating ring which encloses part of the gamma chain. F(1) is attached to F(0) by a central stalk formed by the gamma and epsilon chains, while a peripheral stalk is formed by the delta, b and b' chains.

The protein localises to the plastid. The protein resides in the chloroplast thylakoid membrane. Functionally, f(1)F(0) ATP synthase produces ATP from ADP in the presence of a proton or sodium gradient. F-type ATPases consist of two structural domains, F(1) containing the extramembraneous catalytic core and F(0) containing the membrane proton channel, linked together by a central stalk and a peripheral stalk. During catalysis, ATP synthesis in the catalytic domain of F(1) is coupled via a rotary mechanism of the central stalk subunits to proton translocation. In terms of biological role, key component of the F(0) channel; it plays a direct role in translocation across the membrane. A homomeric c-ring of between 10-14 subunits forms the central stalk rotor element with the F(1) delta and epsilon subunits. This chain is ATP synthase subunit c, chloroplastic, found in Chlorella vulgaris (Green alga).